A 342-amino-acid chain; its full sequence is Ketol-acid reductoisomerase (NADP(+)) (342 aa).

A KARI N-terminal Rossmann domain is found at 2 to 181 (VKVYYNGDIQ…GGARAGVLET (180 aa)). NADP(+) is bound by residues 25-28 (YGSQ), Arg-48, Ser-52, and 82-85 (DEQQ). The active site involves His-107. An NADP(+)-binding site is contributed by Gly-133. The KARI C-terminal knotted domain maps to 182-327 (TFKEETETDL…RKLREMMPFV (146 aa)). Mg(2+) contacts are provided by Asp-190, Glu-194, Glu-226, and Glu-230. Ser-251 is a binding site for substrate.

This sequence belongs to the ketol-acid reductoisomerase family. The cofactor is Mg(2+).

It carries out the reaction (2R)-2,3-dihydroxy-3-methylbutanoate + NADP(+) = (2S)-2-acetolactate + NADPH + H(+). The enzyme catalyses (2R,3R)-2,3-dihydroxy-3-methylpentanoate + NADP(+) = (S)-2-ethyl-2-hydroxy-3-oxobutanoate + NADPH + H(+). The protein operates within amino-acid biosynthesis; L-isoleucine biosynthesis; L-isoleucine from 2-oxobutanoate: step 2/4. It functions in the pathway amino-acid biosynthesis; L-valine biosynthesis; L-valine from pyruvate: step 2/4. Its function is as follows. Involved in the biosynthesis of branched-chain amino acids (BCAA). Catalyzes an alkyl-migration followed by a ketol-acid reduction of (S)-2-acetolactate (S2AL) to yield (R)-2,3-dihydroxy-isovalerate. In the isomerase reaction, S2AL is rearranged via a Mg-dependent methyl migration to produce 3-hydroxy-3-methyl-2-ketobutyrate (HMKB). In the reductase reaction, this 2-ketoacid undergoes a metal-dependent reduction by NADPH to yield (R)-2,3-dihydroxy-isovalerate. The chain is Ketol-acid reductoisomerase (NADP(+)) from Bacillus pumilus (strain SAFR-032).